Reading from the N-terminus, the 505-residue chain is L-carnitine/gamma-butyrobetaine antiporter (505 aa).

A run of 12 helical transmembrane segments spans residues 10 to 30 (IEPK…WLTV), 51 to 71 (WGWA…WLVF), 92 to 112 (IFMM…SIEI), 143 to 163 (GPLP…FFFV), 195 to 215 (FYLV…TPLV), 231 to 251 (LDAI…ACGL), 263 to 283 (SYLS…SFIM), 316 to 336 (WTVF…IFLA), 347 to 367 (LCFG…TVLG), 403 to 423 (LSTA…VTLI), 446 to 466 (LLVR…LLAL), and 475 to 495 (AIIA…LSFI).

It belongs to the BCCT transporter (TC 2.A.15) family. CaiT subfamily. In terms of assembly, homotrimer.

It is found in the cell inner membrane. The catalysed reaction is 4-(trimethylamino)butanoate(in) + (R)-carnitine(out) = 4-(trimethylamino)butanoate(out) + (R)-carnitine(in). It participates in amine and polyamine metabolism; carnitine metabolism. In terms of biological role, catalyzes the exchange of L-carnitine for gamma-butyrobetaine. This Salmonella agona (strain SL483) protein is L-carnitine/gamma-butyrobetaine antiporter.